The primary structure comprises 30 residues: Cyclotide hyen-E (30 aa).

Positions glycine 1 to asparagine 30 form a cross-link, cyclopeptide (Gly-Asn). 3 cysteine pairs are disulfide-bonded: cysteine 4-cysteine 20, cysteine 8-cysteine 22, and cysteine 13-cysteine 27.

In terms of processing, this is a cyclic peptide. Detected in stems (at protein level).

Functionally, probably participates in a plant defense mechanism. Has cytotoxic activity against HUVEC cells (LC(50)= 2.17 uM) and various cancer cells including HeLa (LC(50)= 3.05 uM), MCF-7 and K562. Displays very weak hemolytic activity. Binds to and induces leakage in phospholipd membranes, particularly ones containing 1-palmitoyl-2-oleophosphatidylethanolamine (POPE). The sequence is that of Cyclotide hyen-E from Pigea enneasperma (Spade flower).